Reading from the N-terminus, the 391-residue chain is Succinate--CoA ligase [ADP-forming] subunit beta (391 aa).

The 237-residue stretch at 9–245 (KQIFAEYGVP…LSEEDPDEVE (237 aa)) folds into the ATP-grasp domain. Residues Lys46, 53 to 55 (GRG), Glu99, Ala102, and Glu107 contribute to the ATP site. Residues Asn200 and Asp214 each contribute to the Mg(2+) site. Substrate-binding positions include Asn265 and 322-324 (GIV).

The protein belongs to the succinate/malate CoA ligase beta subunit family. As to quaternary structure, heterotetramer of two alpha and two beta subunits. Requires Mg(2+) as cofactor.

It catalyses the reaction succinate + ATP + CoA = succinyl-CoA + ADP + phosphate. It carries out the reaction GTP + succinate + CoA = succinyl-CoA + GDP + phosphate. The protein operates within carbohydrate metabolism; tricarboxylic acid cycle; succinate from succinyl-CoA (ligase route): step 1/1. Functionally, succinyl-CoA synthetase functions in the citric acid cycle (TCA), coupling the hydrolysis of succinyl-CoA to the synthesis of either ATP or GTP and thus represents the only step of substrate-level phosphorylation in the TCA. The beta subunit provides nucleotide specificity of the enzyme and binds the substrate succinate, while the binding sites for coenzyme A and phosphate are found in the alpha subunit. The chain is Succinate--CoA ligase [ADP-forming] subunit beta from Sulfurovum sp. (strain NBC37-1).